The following is a 41-amino-acid chain: Large ribosomal subunit protein bL36 (41 aa).

It belongs to the bacterial ribosomal protein bL36 family.

This is Large ribosomal subunit protein bL36 from Pelagibacter ubique (strain HTCC1062).